The following is an 83-amino-acid chain: Small ribosomal subunit protein uS17 (83 aa).

This sequence belongs to the universal ribosomal protein uS17 family. In terms of assembly, part of the 30S ribosomal subunit.

Its function is as follows. One of the primary rRNA binding proteins, it binds specifically to the 5'-end of 16S ribosomal RNA. The chain is Small ribosomal subunit protein uS17 from Campylobacter jejuni subsp. jejuni serotype O:6 (strain 81116 / NCTC 11828).